The following is a 485-amino-acid chain: UBX domain-containing protein 11 (485 aa).

The tract at residues Met1–Arg26 is disordered. Residues His67–Asp143 are a coiled coil. The 65-residue stretch at Leu224 to Pro288 folds into the SEP domain. The UBX domain maps to Pro386–Leu463. Phosphoserine is present on residues Ser479 and Ser483.

As to quaternary structure, interacts with GNA12, GNA13, RND1, RND2 and RND3. As to expression, strongly expressed in testis. Also expressed in lung, brain and thymus.

The protein resides in the cytoplasm. The protein localises to the cytoskeleton. May be involved in the reorganization of actin cytoskeleton mediated by RND1, RND2 and RND3. Promotes RHOA activation mediated by GNA12 and GNA13. The polypeptide is UBX domain-containing protein 11 (Ubxn11) (Rattus norvegicus (Rat)).